The chain runs to 528 residues: Succinate-semialdehyde dehydrogenase, mitochondrial (528 aa).

A mitochondrion-targeting transit peptide spans 1–34; sequence MVIGAAARVAIGGCRKLISSHTSLLLVSSQCRQM. NAD(+) is bound at residue 196–198; it reads TPW. Arg-207 serves as a coordination point for substrate. NAD(+) is bound by residues 222–225, 275–280, and Glu-297; these read KPSE and GSTAVG. Glu-297 functions as the Proton acceptor in the catalytic mechanism. Arg-325 serves as a coordination point for substrate. The active-site Nucleophile is Cys-331. A disulfide bond links Cys-331 and Cys-333. 428–430 contacts NAD(+); the sequence is EIF. Residue Ser-488 coordinates substrate.

The protein belongs to the aldehyde dehydrogenase family. As to quaternary structure, homotetramer. In terms of tissue distribution, expressed in developing leaf tissues.

It localises to the mitochondrion matrix. It catalyses the reaction succinate semialdehyde + NAD(+) + H2O = succinate + NADH + 2 H(+). It participates in amino-acid degradation; 4-aminobutanoate degradation. With respect to regulation, competitive inhibition by NADH. Inhibited by ATP, ADP and AMP. Redox-regulated. Inhibited under oxydizing conditions. Functionally, oxidizes specifically succinate semialdehyde. Involved in plant response to environmental stress by preventing the accumulation of reactive oxygen species, probably by regulating proline, gamma-hydroxybutyrate (GHB) and gamma-aminobutyrate (GABA) levels. Required for the maintenance of the shoot apical meristem (SAM) structure and subsequent adaxial-abaxial axis-dependent development of cotyledons and leaves. This is Succinate-semialdehyde dehydrogenase, mitochondrial from Arabidopsis thaliana (Mouse-ear cress).